A 212-amino-acid chain; its full sequence is Membrane-bound lytic murein transglycosylase E (212 aa).

The protein belongs to the transglycosylase Slt family.

It catalyses the reaction Exolytic cleavage of the (1-&gt;4)-beta-glycosidic linkage between N-acetylmuramic acid (MurNAc) and N-acetylglucosamine (GlcNAc) residues in peptidoglycan, from either the reducing or the non-reducing ends of the peptidoglycan chains, with concomitant formation of a 1,6-anhydrobond in the MurNAc residue.. Murein-degrading enzyme. May play a role in recycling of muropeptides during cell elongation and/or cell division. This chain is Membrane-bound lytic murein transglycosylase E (mltE), found in Buchnera aphidicola subsp. Baizongia pistaciae (strain Bp).